The primary structure comprises 306 residues: MTASLHIILDTDPGIDDAAAIAAALFAPQLDLQLITTVAGNVSVEKTTRNALQLLHFWNSDIPLAQGAATPLLRPLRDAAYVHGESGMEGYDFVDHQRQPLAKPAFIAIRDVLMNAPEPMTLVAIGPLTNIALLLMHYPECACNIHRLVLMGGSAGRGNFTPNAEFNIAVDPEAAALVFRSGLEIVMCGLDVTNQAMLSPDFLNKLPALNRTGKMLHSLFNHYRSGSMRTGVRMHDLCAIAWLVRPELFTLQSCFVAVETQGQYTAGTTVVDIEGRLGQPANAQVALALDVDGFRQWVAEVFAYAP.

The active site involves His235.

The protein belongs to the IUNH family. RihC subfamily.

Functionally, hydrolyzes both purine and pyrimidine ribonucleosides with a broad-substrate specificity. This chain is Non-specific ribonucleoside hydrolase RihC, found in Salmonella paratyphi B (strain ATCC BAA-1250 / SPB7).